A 423-amino-acid polypeptide reads, in one-letter code: Mannitol-1-phosphate 5-dehydrogenase (423 aa).

Residues cysteine 40, histidine 69, and glutamate 70 each coordinate Zn(2+).

It belongs to the zinc-containing alcohol dehydrogenase family. The cofactor is Zn(2+).

The catalysed reaction is D-mannitol 1-phosphate + NAD(+) = beta-D-fructose 6-phosphate + NADH + H(+). Seems to be involved in mannitol utilization. Complements an E.coli mtlD deletion mutant. In Aliivibrio fischeri (strain ATCC 700601 / ES114) (Vibrio fischeri), this protein is Mannitol-1-phosphate 5-dehydrogenase.